We begin with the raw amino-acid sequence, 364 residues long: MHFFQSSLVAATMGAALVAAAPAADLETRGSCTFTSTSALKSGKASCSTITLQNIAVPAGETLDLTGLKTGTTVVFDGTTTFGYKEWEGPLISASGTSITIKQNPGAKIDCDGARWWDGKGGNGGKKKPKFFSAHKLNKSNITGLKVYNTPVHGFSIQSDHLTIKDVLLDNSAGTKLGHNTDAFDVGSSTYITIDGATVYNQDDCLAVNSGEHITFTNGYCNGGHGLSIGSVGGRSNNVVNDVTISNSQVINSQNGARIKTVYGATGSVTGVKFQDISLKGITKYGIVVQQDYENGKPTGKPTNGVKVSDITFEKVTGTVTSSATDIYILCGSGSCTNWTWSGNSVTGGKKSSSCKNVPAGASC.

The signal sequence occupies residues 1 to 20 (MHFFQSSLVAATMGAALVAA). The propeptide occupies 21-29 (APAADLETR). The cysteines at positions 32 and 47 are disulfide-linked. 2 N-linked (GlcNAc...) asparagine glycosylation sites follow: Asn-138 and Asn-141. PbH1 repeat units lie at residues 159-188 (SDHLTIKDVLLDNSAGTKLGHNTDAFDVGS), 189-210 (STYITIDGATVYNQDDCLAVNS), 211-231 (GEHITFTNGYCNGGHGLSIGS), 240-261 (VNDVTISNSQVINSQNGARIKT), 269-291 (VTGVKFQDISLKGITKYGIVVQQ), and 303-324 (TNGVKVSDITFEKVTGTVTSSA). Catalysis depends on Asp-203, which acts as the Proton donor. Cys-205 and Cys-221 are joined by a disulfide. His-225 is a catalytic residue. Cys-331 and Cys-336 are joined by a disulfide. Asn-338 carries an N-linked (GlcNAc...) asparagine glycan. A disulfide bridge links Cys-355 with Cys-364.

The protein belongs to the glycosyl hydrolase 28 family.

It localises to the secreted. It catalyses the reaction (1,4-alpha-D-galacturonosyl)n+m + H2O = (1,4-alpha-D-galacturonosyl)n + (1,4-alpha-D-galacturonosyl)m.. Involved in maceration and soft-rotting of plant tissue. Hydrolyzes the 1,4-alpha glycosidic bonds of de-esterified pectate in the smooth region of the plant cell wall. The polypeptide is Probable endopolygalacturonase B (pgaB) (Aspergillus fumigatus (strain ATCC MYA-4609 / CBS 101355 / FGSC A1100 / Af293) (Neosartorya fumigata)).